A 75-amino-acid chain; its full sequence is Translation initiation factor IF-1, chloroplastic (75 aa).

The protein belongs to the IF-1 family. In terms of assembly, component of the 30S ribosomal translation pre-initiation complex which assembles on the 30S ribosome in the order IF-2 and IF-3, IF-1 and N-formylmethionyl-tRNA(fMet); mRNA recruitment can occur at any time during PIC assembly.

The protein resides in the plastid. It is found in the chloroplast. In terms of biological role, one of the essential components for the initiation of protein synthesis. Stabilizes the binding of IF-2 and IF-3 on the 30S subunit to which N-formylmethionyl-tRNA(fMet) subsequently binds. Helps modulate mRNA selection, yielding the 30S pre-initiation complex (PIC). Upon addition of the 50S ribosomal subunit IF-1, IF-2 and IF-3 are released leaving the mature 70S translation initiation complex. The sequence is that of Translation initiation factor IF-1, chloroplastic (infA) from Cucumis sativus (Cucumber).